The sequence spans 200 residues: Polyadenylate-binding protein 1-like 2 (200 aa).

RRM domains are found at residues 2-80 and 90-166; these read ASLY…WSQR and GNVF…RFKS. Positions 170-200 are disordered; it reads REAERGAWARQSTSADVKDFEEDTDEEATLR. Positions 188-200 are enriched in acidic residues; the sequence is DFEEDTDEEATLR.

The protein is Polyadenylate-binding protein 1-like 2 (PABPC1L2A) of Homo sapiens (Human).